Consider the following 199-residue polypeptide: Thymidine kinase (199 aa).

ATP-binding positions include G15–S22 and D88–Q91. The Proton acceptor role is filled by E89. Residues C145, C148, C183, and H186 each coordinate Zn(2+).

Belongs to the thymidine kinase family. Homotetramer.

It localises to the cytoplasm. The enzyme catalyses thymidine + ATP = dTMP + ADP + H(+). The chain is Thymidine kinase from Staphylococcus saprophyticus subsp. saprophyticus (strain ATCC 15305 / DSM 20229 / NCIMB 8711 / NCTC 7292 / S-41).